The following is a 475-amino-acid chain: Aspartyl/glutamyl-tRNA(Asn/Gln) amidotransferase subunit B (475 aa).

This sequence belongs to the GatB/GatE family. GatB subfamily. In terms of assembly, heterotrimer of A, B and C subunits.

It catalyses the reaction L-glutamyl-tRNA(Gln) + L-glutamine + ATP + H2O = L-glutaminyl-tRNA(Gln) + L-glutamate + ADP + phosphate + H(+). It carries out the reaction L-aspartyl-tRNA(Asn) + L-glutamine + ATP + H2O = L-asparaginyl-tRNA(Asn) + L-glutamate + ADP + phosphate + 2 H(+). In terms of biological role, allows the formation of correctly charged Asn-tRNA(Asn) or Gln-tRNA(Gln) through the transamidation of misacylated Asp-tRNA(Asn) or Glu-tRNA(Gln) in organisms which lack either or both of asparaginyl-tRNA or glutaminyl-tRNA synthetases. The reaction takes place in the presence of glutamine and ATP through an activated phospho-Asp-tRNA(Asn) or phospho-Glu-tRNA(Gln). The polypeptide is Aspartyl/glutamyl-tRNA(Asn/Gln) amidotransferase subunit B (Clostridium novyi (strain NT)).